The primary structure comprises 307 residues: Glycerol-3-phosphate dehydrogenase [NAD(P)+] (307 aa).

Residues W14, R34, R35, and K82 each contribute to the NADPH site. Sn-glycerol 3-phosphate is bound by residues K82 and G110. S114 serves as a coordination point for NADPH. Sn-glycerol 3-phosphate contacts are provided by K165, D218, S228, R229, and N230. Catalysis depends on K165, which acts as the Proton acceptor. R229 contacts NADPH. NADPH is bound at residue E255.

The protein belongs to the NAD-dependent glycerol-3-phosphate dehydrogenase family.

The protein resides in the cytoplasm. The catalysed reaction is sn-glycerol 3-phosphate + NAD(+) = dihydroxyacetone phosphate + NADH + H(+). It carries out the reaction sn-glycerol 3-phosphate + NADP(+) = dihydroxyacetone phosphate + NADPH + H(+). It functions in the pathway membrane lipid metabolism; glycerophospholipid metabolism. Catalyzes the reduction of the glycolytic intermediate dihydroxyacetone phosphate (DHAP) to sn-glycerol 3-phosphate (G3P), the key precursor for phospholipid synthesis. This chain is Glycerol-3-phosphate dehydrogenase [NAD(P)+], found in Trichormus variabilis (strain ATCC 29413 / PCC 7937) (Anabaena variabilis).